Reading from the N-terminus, the 560-residue chain is Muellerian-inhibiting factor (560 aa).

Positions 1 to 24 (MRDLPLTSLALVLSALGALLGTEA) are cleaved as a signal peptide. A propeptide spanning residues 25–451 (LRAEEPAVGT…DPRGPGRAQR (427 aa)) is cleaved from the precursor. Residue Asn64 is glycosylated (N-linked (GlcNAc...) asparagine). The segment at 259-287 (PLPAHGQLDTVPFPPPRPSAELEESPPSA) is disordered. A glycan (N-linked (GlcNAc...) asparagine) is linked at Asn329. Disulfide bonds link Cys462–Cys526, Cys488–Cys557, and Cys492–Cys559.

This sequence belongs to the TGF-beta family. In terms of assembly, homodimer; disulfide-linked. Preproprotein is proteolytically processed to generate N- and C-terminal cleavage products that homodimerize and associate to form a biologically active non-covalent complex. Binding of the non-covalent complex to AMHR2 induces dissociation of the pro-region from the mature C-terminal dimer. The N-terminal portion of the protein, despite having no intrinsic activity, has the role of amplifying the activity of the C-terminus. In terms of tissue distribution, in ovaries, AMH is detected in granulosa cells of early growing follicles.

It is found in the secreted. Functionally, plays an important role in several reproductive functions. Induces Muellerian duct regression during male fetal sexual differentiation. Also plays a role in Leydig cell differentiation and function. In female acts as a negative regulator of the primordial to primary follicle transition and decreases FSH sensitivity of growing follicles. AMH signals by binding to a specific type-II receptor, AMHR2, that heterodimerizes with type-I receptors (ACVR1 and BMPR1A), and recruiting SMAD proteins that are translocated to the nucleus to regulate target gene expression. This is Muellerian-inhibiting factor from Homo sapiens (Human).